We begin with the raw amino-acid sequence, 339 residues long: DNA-directed RNA polymerase subunit alpha (339 aa).

Residues 1-233 (MVREEVAGST…DLFLPFLHAE (233 aa)) form an alpha N-terminal domain (alpha-NTD) region. The segment at 264-339 (KKGIPLNCIF…IDLLKNKLSF (76 aa)) is alpha C-terminal domain (alpha-CTD).

This sequence belongs to the RNA polymerase alpha chain family. In terms of assembly, in plastids the minimal PEP RNA polymerase catalytic core is composed of four subunits: alpha, beta, beta', and beta''. When a (nuclear-encoded) sigma factor is associated with the core the holoenzyme is formed, which can initiate transcription.

The protein resides in the plastid. It is found in the chloroplast. The enzyme catalyses RNA(n) + a ribonucleoside 5'-triphosphate = RNA(n+1) + diphosphate. Its function is as follows. DNA-dependent RNA polymerase catalyzes the transcription of DNA into RNA using the four ribonucleoside triphosphates as substrates. The sequence is that of DNA-directed RNA polymerase subunit alpha from Elymus hystrix (Eastern bottlebrush grass).